The following is a 406-amino-acid chain: MYTTPAPPEITRRSSEPSTQQGTLGSLEGEKGHLLFPGFVVLVTIFLVVIVTCILWSRKKQKKRRVPYLQVTPSLALPPPRQRAKNIYDFLPRQQTELGRHQLSGFSTESLLSRASDSPEPEVPQASGSLQKHRASVHAVEYTVGVYDNGTVAQMCGPLASSAHRVCDGTSRNNSISSKESNDYVNIPTAEDTSETLTCTKSTPESHLGLPSGQRLEFAEGGHAGCGKATDRTGVWAPGLQGSNSLSEGDDSSQSSNDYVNMTGLDLEDIQESRPRVAFQCCRDYENVPPVVANGSQLQTVEEVTSSTTDRGEPAQRTLPSVYHMAFRPSAWSEDGAMIPGEEASNGDSSDYENVLVPELEGKDWKQGPGTWHPSDERTPSDQAGKFCEAVYPAGSLATETSGEEV.

A disordered region spans residues 1 to 25 (MYTTPAPPEITRRSSEPSTQQGTLG). Topologically, residues 1-33 (MYTTPAPPEITRRSSEPSTQQGTLGSLEGEKGH) are extracellular. A helical; Signal-anchor for type III membrane protein membrane pass occupies residues 34-54 (LLFPGFVVLVTIFLVVIVTCI). The Cytoplasmic portion of the chain corresponds to 55 to 406 (LWSRKKQKKR…LATETSGEEV (352 aa)). The interval 109–131 (ESLLSRASDSPEPEVPQASGSLQ) is disordered. At tyrosine 184 the chain carries Phosphotyrosine. Residues 219 to 258 (AEGGHAGCGKATDRTGVWAPGLQGSNSLSEGDDSSQSSND) form a disordered region. The segment covering 242-258 (GSNSLSEGDDSSQSSND) has biased composition (low complexity). Residues tyrosine 259, tyrosine 285, and tyrosine 352 each carry the phosphotyrosine modification. A disordered region spans residues 358-406 (PELEGKDWKQGPGTWHPSDERTPSDQAGKFCEAVYPAGSLATETSGEEV).

When phosphorylated, interacts with GRB2, PIK3R1 and GRAP2. Post-translationally, phosphorylated on tyrosines upon TCR or BCR activation; which leads to the recruitment of GRB2, PIK3R1 and GRAP2.

It is found in the cell membrane. Negatively regulates TCR (T-cell antigen receptor)-mediated signaling in T-cells and BCR (B-cell antigen receptor)-mediated signaling in B-cells. The sequence is that of Lymphocyte transmembrane adapter 1 (Lax1) from Rattus norvegicus (Rat).